The chain runs to 2471 residues: Polyprotein P1234 (2471 aa).

The region spanning glutamate 28–histidine 257 is the Alphavirus-like MT domain. Residues glycine 242 to valine 261 form a nsP1 membrane-binding region. Cysteine 417 is lipidated: S-palmitoyl cysteine; by host. A (+)RNA virus helicase ATP-binding domain is found at aspartate 688–lysine 839. Position 719-726 (glycine 719–serine 726) interacts with a ribonucleoside 5'-triphosphate. In terms of domain architecture, (+)RNA virus helicase C-terminal spans serine 840–alanine 988. One can recognise a Peptidase C9 domain in the interval aspartate 1001–serine 1320. The segment at valine 1002 to threonine 1021 is nucleolus localization signal. The active-site For cysteine protease nsP2 activity is the cysteine 1010. A Nuclear export signal motif is present at residues threonine 1054 to serine 1063. Catalysis depends on histidine 1079, which acts as the For cysteine protease nsP2 activity. A Nuclear localization signal motif is present at residues proline 1177–valine 1181. The Macro domain occupies alanine 1328–glutamate 1486. Residues aspartate 1337, asparagine 1351, glycine 1359, glycine 1438, valine 1439, and tyrosine 1440 each contribute to the ADP-D-ribose site. Zn(2+)-binding residues include cysteine 1589, cysteine 1591, cysteine 1614, and cysteine 1632. The disordered stretch occupies residues arginine 1669–methionine 1692. The span at arginine 1670–isoleucine 1681 shows a compositional bias: pro residues. The interval leucine 1771–asparagine 1783 is binding to host G3BP family members. Residues isoleucine 1798–valine 1838 form a disordered region. Over residues arginine 1805–valine 1822 the composition is skewed to basic and acidic residues. Over residues proline 1823–lysine 1834 the composition is skewed to basic residues. Residues proline 1835–isoleucine 1851 are binding to host FXR family members. The 116-residue stretch at aspartate 2228–alanine 2343 folds into the RdRp catalytic domain.

In terms of assembly, interacts with non-structural protein 3. Interacts with RNA-directed RNA polymerase nsP4. Interacts with protease nsP2. interacts with itself. Interacts with mRNA-capping enzyme nsP1. Interacts with host DDX1. Interacts with host DDX3. Interacts (via C-terminus) with host FXR1; this interaction inhibits the formation of host stress granules on viral mRNAs and the nsp3-FXR1 complexes bind viral RNAs and probably orchestrate the assembly of viral replication complexes. Interacts (via C-terminus) with host FXR2; this interaction inhibits the formation of host stress granules on viral mRNAs and the nsp3-FXR2 complexes bind viral RNAs and probably orchestrate the assembly of viral replication complexes. Interacts (via C-terminus) with host FMR1; this interaction inhibits the formation of host stress granules on viral mRNAs and the nsp3-FMR1 complexes bind viral RNAs and probably orchestrate the assembly of viral replication complexes. Interacts (via C-terminus) with host G3BP1; this interaction inhibits the formation of host stress granules on viral mRNAs and the nsp3-G3BP1 complexes bind viral RNAs and probably orchestrate the assembly of viral replication complexes. Interacts (via C-terminus) with host G3BP2; this interaction inhibits the formation of host stress granules on viral mRNAs and the nsp3-G3BP2 complexes bind viral RNAs and probably orchestrate the assembly of viral replication complexes. As to quaternary structure, interacts with mRNA-capping enzyme nsP1. Interacts with protease nsP2. interacts with itself. In terms of assembly, interacts with RNA-directed RNA polymerase nsP4. Interacts with mRNA-capping enzyme nsP1. Interacts with KPNA1/karyopherin-alpha1; this interaction probably allows the active transport of protease nsP2 into the host nucleus. The cofactor is Mg(2+). Mn(2+) is required as a cofactor. In terms of processing, specific enzymatic cleavages in vivo yield mature proteins. The processing of the polyprotein is temporally regulated. In early stages (1.7 hpi), P1234 is first cleaved in trans through its nsP2 protease activity, releasing P123' and nsP4, which associate to form the early replication complex. At the same time, P1234 is also cut at the nsP1/nsP2 site early in infection but with lower efficiency. After replication of the viral minus-strand RNAs (4 hpi), the polyproteins are cut at the nsP1/nsP2 and nsP2/nsP3 sites very efficiently, preventing accumulation of P123' and P1234 and allowing the formation of the late replication complex. NsP3'/nsP4 site is not cleaved anymore and P34 is produced rather than nsP4. Specific enzymatic cleavages in vivo yield mature proteins. The processing of the polyprotein is temporally regulated. In early stages (1.7 hpi), P123 is cleaved at the nsP1/nsP2 site with low efficiency. After replication of the viral minus-strand RNAs (4 hpi), the polyproteins are cut at the nsP1/nsP2 and nsP2/nsP3 sites very efficiently, preventing accumulation of P123 and allowing the formation of the late replication complex. Post-translationally, specific enzymatic cleavages in vivo yield mature proteins. The processing of the polyprotein is temporally regulated. In early stages (1.7 hpi), P123' is cleaved at the nsP1/nsP2 site with low efficiency. After replication of the viral minus-strand RNAs (4 hpi), the polyproteins are cut at the nsP1/nsP2 and nsP2/nsP3 sites very efficiently, preventing accumulation of P123' and allowing the formation of the late replication complex. In terms of processing, palmitoylated by host palmitoyltransferases ZDHHC2 and ZDHHC19. Phosphorylated by host on serines and threonines. Post-translationally, ubiquitinated; targets the protein for rapid degradation via the ubiquitin system. Nsp4 is present in extremely low quantities due to low frequency of translation through the amber stop-codon and the degradation by the ubiquitin pathway.

The protein localises to the host cytoplasmic vesicle membrane. It localises to the host cell membrane. It is found in the host cell projection. The protein resides in the host filopodium. Its subcellular location is the host nucleus. The protein localises to the host cytoplasm. It catalyses the reaction GTP + S-adenosyl-L-methionine = N(7)-methyl-GTP + S-adenosyl-L-homocysteine. The enzyme catalyses N(7)-methyl-GTP + L-histidyl-[protein] = N(tele)-(N(7)-methylguanosine 5'-phospho)-L-histidyl-[protein] + diphosphate. The catalysed reaction is N(tele)-(N(7)-methylguanosine 5'-phospho)-L-histidyl-[protein] + a 5'-end diphospho-(purine-ribonucleoside) in mRNA + H(+) = a 5'-end (N(7)-methyl 5'-triphosphoguanosine)-(purine-ribonucleoside) in mRNA + L-histidyl-[protein]. It carries out the reaction a 5'-end triphospho-ribonucleoside in mRNA + H2O = a 5'-end diphospho-ribonucleoside in mRNA + phosphate + H(+). It catalyses the reaction a ribonucleoside 5'-triphosphate + H2O = a ribonucleoside 5'-diphosphate + phosphate + H(+). The enzyme catalyses ATP + H2O = ADP + phosphate + H(+). The catalysed reaction is RNA(n) + a ribonucleoside 5'-triphosphate = RNA(n+1) + diphosphate. It carries out the reaction 4-O-(ADP-D-ribosyl)-L-aspartyl-[protein] + H2O = L-aspartyl-[protein] + ADP-D-ribose + H(+). It catalyses the reaction 5-O-(ADP-D-ribosyl)-L-glutamyl-[protein] + H2O = L-glutamyl-[protein] + ADP-D-ribose + H(+). The enzyme catalyses RNA(n) + ATP = RNA(n)-3'-adenine ribonucleotide + diphosphate. The catalysed reaction is ADP-alpha-D-ribose 1''-phosphate + H2O = ADP-D-ribose + phosphate. With respect to regulation, inhibited by sinefungin. Functionally, inactive precursor of the viral replicase, which is activated by cleavages carried out by the viral protease nsP2. In terms of biological role, the early replication complex formed by the polyprotein P123 and nsP4 synthesizes the minus-strand RNAs (antigenome). Polyprotein P123 is a short-lived polyprotein that accumulates during early stage of infection. As soon P123 is cleaved into mature proteins, the plus-strand RNAs synthesis begins. Its function is as follows. The early replication complex formed by the polyprotein P123' and nsP4 synthesizes minus-strand RNAs (antigenome). Polyprotein P123' is a short-lived polyprotein that accumulates during early stage of infection. As soon P123' is cleaved into mature proteins, the plus-strand RNAs synthesis begins. Cytoplasmic capping enzyme that catalyzes two virus-specific reactions: methyltransferase and nsP1 guanylyltransferase. mRNA-capping is necessary since all viral RNAs are synthesized in the cytoplasm, and host capping enzymes are restricted to the nucleus. The enzymatic reaction involves a covalent link between 7-methyl-GMP and nsP1, whereas eukaryotic capping enzymes form a covalent complex only with GMP. NsP1 capping consists in the following reactions: GTP is first methylated into 7-methyl-GMP and then is covalently linked to nsP1 to form the m7GMp-nsP1 complex from which 7-methyl-GMP complex is transferred to the mRNA to create the cap structure. NsP1 is also needed for the initiation of the minus-strand RNAs synthesis. Probably serves as a membrane anchor for the replication complex composed of nsP1-nsP4. Nsp1 is needed for the initiation of the minus-strand RNAs synthesis. Palmitoylated nsP1 is remodeling host cell cytoskeleton, and induces filopodium-like structure formation at the surface of the host cell. Functionally, multifunctional protein whose N-terminus is part of the RNA polymerase complex and displays NTPase, RNA triphosphatase and helicase activities. NTPase and RNA triphosphatase are involved in viral RNA capping and helicase keeps a check on the dsRNA replication intermediates. The C-terminus harbors a protease that specifically cleaves the polyproteins and releases the mature proteins. Required for the shutoff of minus-strand RNAs synthesis. Inhibits host translation to ensure maximal viral gene expression and evade host immune response. In terms of biological role, seems to be essential for minus-strand RNAs and subgenomic 26S mRNAs synthesis. Displays mono-ADP-ribosylhydrolase activity. ADP-ribosylation is a post-translational modification that controls various processes of the host cell and the virus probably needs to revert it for optimal viral replication. Binds proteins of FXR and G3BP families and sequesters them into the viral RNA replication complexes thereby inhibiting the formation of host stress granules on viral mRNAs. The nsp3-FXR and nsp3-G3BP complexes bind viral RNAs and probably orchestrate the assembly of viral replication complexes, thanks to the ability of G3BP and FXR family members to self-assemble and bind DNA. Its function is as follows. Seems to be essential for minus-strand RNAs and subgenomic 26S mRNAs synthesis. Displays mono-ADP-ribosylhydrolase activity. ADP-ribosylation is a post-translational modification that controls various processes of the host cell and the virus probably needs to revert it for optimal viral replication. Binds proteins of FXR and G3BP families and sequesters them into the viral RNA replication complexes thereby inhibiting the formation of host stress granules on viral mRNAs. The nsp3'-FXR and nsp3-G3BP complexes bind viral RNAs and probably orchestrate the assembly of viral replication complexes, thanks to the ability of G3BP and FXR family members to self-assemble and bind DNA. RNA dependent RNA polymerase. Replicates genomic and antigenomic RNA by recognizing replications specific signals. The early replication complex formed by the polyprotein P123 and nsP4 synthesizes minus-strand RNAs. The late replication complex composed of fully processed nsP1-nsP4 is responsible for the production of genomic and subgenomic plus-strand RNAs. This chain is Polyprotein P1234, found in Eastern equine encephalitis virus (strain PE-0.0155) (EEEV).